Consider the following 393-residue polypeptide: Probable acetyl-CoA acetyltransferase (393 aa).

Residue T2 is a propeptide, removed; alternate. The active-site Acyl-thioester intermediate is the C88. Catalysis depends on proton acceptor residues H349 and C379.

It belongs to the thiolase-like superfamily. Thiolase family.

The enzyme catalyses 2 acetyl-CoA = acetoacetyl-CoA + CoA. The protein is Probable acetyl-CoA acetyltransferase (fadA4) of Mycobacterium tuberculosis (strain ATCC 25618 / H37Rv).